Reading from the N-terminus, the 343-residue chain is Large ribosomal subunit protein uL3 (343 aa).

2 disordered regions span residues 1-31 (MGHR…TPRS) and 238-262 (KGSR…PGQM).

It belongs to the universal ribosomal protein uL3 family. Part of the 50S ribosomal subunit. Forms a cluster with proteins L14 and L24e.

Functionally, one of the primary rRNA binding proteins, it binds directly near the 3'-end of the 23S rRNA, where it nucleates assembly of the 50S subunit. This chain is Large ribosomal subunit protein uL3, found in Sulfurisphaera tokodaii (strain DSM 16993 / JCM 10545 / NBRC 100140 / 7) (Sulfolobus tokodaii).